The following is a 262-amino-acid chain: Cytochrome c oxidase subunit 3 (262 aa).

The next 7 membrane-spanning stretches (helical) occupy residues Pro-16 to Phe-36, Thr-42 to Trp-59, Gly-83 to Phe-103, Phe-128 to Ala-148, Ser-163 to Ile-183, Phe-198 to Ile-218, and Ala-240 to Trp-260.

This sequence belongs to the cytochrome c oxidase subunit 3 family. Component of the cytochrome c oxidase (complex IV, CIV), a multisubunit enzyme composed of a catalytic core of 3 subunits and several supernumerary subunits. The complex exists as a monomer or a dimer and forms supercomplexes (SCs) in the inner mitochondrial membrane with ubiquinol-cytochrome c oxidoreductase (cytochrome b-c1 complex, complex III, CIII).

It is found in the mitochondrion inner membrane. The catalysed reaction is 4 Fe(II)-[cytochrome c] + O2 + 8 H(+)(in) = 4 Fe(III)-[cytochrome c] + 2 H2O + 4 H(+)(out). In terms of biological role, component of the cytochrome c oxidase, the last enzyme in the mitochondrial electron transport chain which drives oxidative phosphorylation. The respiratory chain contains 3 multisubunit complexes succinate dehydrogenase (complex II, CII), ubiquinol-cytochrome c oxidoreductase (cytochrome b-c1 complex, complex III, CIII) and cytochrome c oxidase (complex IV, CIV), that cooperate to transfer electrons derived from NADH and succinate to molecular oxygen, creating an electrochemical gradient over the inner membrane that drives transmembrane transport and the ATP synthase. Cytochrome c oxidase is the component of the respiratory chain that catalyzes the reduction of oxygen to water. Electrons originating from reduced cytochrome c in the intermembrane space (IMS) are transferred via the dinuclear copper A center (CU(A)) of subunit 2 and heme A of subunit 1 to the active site in subunit 1, a binuclear center (BNC) formed by heme A3 and copper B (CU(B)). The BNC reduces molecular oxygen to 2 water molecules using 4 electrons from cytochrome c in the IMS and 4 protons from the mitochondrial matrix. The protein is Cytochrome c oxidase subunit 3 of Aedes aegypti (Yellowfever mosquito).